We begin with the raw amino-acid sequence, 155 residues long: 6,7-dimethyl-8-ribityllumazine synthase (155 aa).

Residues Phe22, 57 to 59 (AYE), and 81 to 83 (SVI) each bind 5-amino-6-(D-ribitylamino)uracil. 86–87 (GT) provides a ligand contact to (2S)-2-hydroxy-3-oxobutyl phosphate. His88 functions as the Proton donor in the catalytic mechanism. Residue Phe113 participates in 5-amino-6-(D-ribitylamino)uracil binding. Residue Arg127 participates in (2S)-2-hydroxy-3-oxobutyl phosphate binding.

The protein belongs to the DMRL synthase family. As to quaternary structure, forms an icosahedral capsid composed of 60 subunits, arranged as a dodecamer of pentamers.

It catalyses the reaction (2S)-2-hydroxy-3-oxobutyl phosphate + 5-amino-6-(D-ribitylamino)uracil = 6,7-dimethyl-8-(1-D-ribityl)lumazine + phosphate + 2 H2O + H(+). Its pathway is cofactor biosynthesis; riboflavin biosynthesis; riboflavin from 2-hydroxy-3-oxobutyl phosphate and 5-amino-6-(D-ribitylamino)uracil: step 1/2. In terms of biological role, catalyzes the formation of 6,7-dimethyl-8-ribityllumazine by condensation of 5-amino-6-(D-ribitylamino)uracil with 3,4-dihydroxy-2-butanone 4-phosphate. This is the penultimate step in the biosynthesis of riboflavin. In Photobacterium phosphoreum, this protein is 6,7-dimethyl-8-ribityllumazine synthase.